Reading from the N-terminus, the 69-residue chain is Large ribosomal subunit protein bL28 (69 aa).

A disordered region spans residues 1 to 27 (MSRRCSVSGKGPLVGNNVSHANNKTKR).

The protein belongs to the bacterial ribosomal protein bL28 family.

This chain is Large ribosomal subunit protein bL28, found in Sulfurovum sp. (strain NBC37-1).